Here is a 502-residue protein sequence, read N- to C-terminus: Arabinose import ATP-binding protein AraG (502 aa).

ABC transporter domains are found at residues 6-241 and 252-497; these read LEFD…MVGR and REVG…MVES. 38–45 is an ATP binding site; it reads GENGAGKS.

This sequence belongs to the ABC transporter superfamily. Arabinose importer (TC 3.A.1.2.2) family. As to quaternary structure, the complex is composed of two ATP-binding proteins (AraG), two transmembrane proteins (AraH) and a solute-binding protein (AraF).

The protein localises to the cell inner membrane. It carries out the reaction L-arabinose(out) + ATP + H2O = L-arabinose(in) + ADP + phosphate + H(+). Its function is as follows. Part of the ABC transporter complex AraFGH involved in arabinose import. Responsible for energy coupling to the transport system. This chain is Arabinose import ATP-binding protein AraG, found in Mannheimia succiniciproducens (strain KCTC 0769BP / MBEL55E).